We begin with the raw amino-acid sequence, 79 residues long: Succinate dehydrogenase assembly factor 1, mitochondrial (79 aa).

It belongs to the complex I LYR family. SDHAF1 subfamily. In terms of assembly, interacts with sdh2 within an sdh1-sdh2 subcomplex.

It is found in the mitochondrion matrix. Functionally, plays an essential role in the assembly of succinate dehydrogenase (SDH), an enzyme complex (also referred to as respiratory complex II) that is a component of both the tricarboxylic acid (TCA) cycle and the mitochondrial electron transport chain, and which couples the oxidation of succinate to fumarate with the reduction of ubiquinone (coenzyme Q) to ubiquinol. Promotes maturation of the iron-sulfur protein subunit sdh2 of the SDH catalytic dimer, protecting it from the deleterious effects of oxidants. May act together with SDHAF3. The protein is Succinate dehydrogenase assembly factor 1, mitochondrial of Schizosaccharomyces pombe (strain 972 / ATCC 24843) (Fission yeast).